The primary structure comprises 381 residues: Phthiodiolone/phenolphthiodiolone dimycocerosates ketoreductase (381 aa).

Belongs to the mer family. Phthiodiolone/phenolphthiodiolone dimycocerosates ketoreductase subfamily.

Functionally, catalyzes the reduction of the keto moiety of phthiodiolone dimycocerosates (DIM B) and glycosylated phenolphthiodiolone dimycocerosates to form the intermediate compounds phthiotriol and glycosylated phenolphthiotriol dimycocerosates during phthiocerol dimycocerosates (DIM A) and glycosylated phenolphthiocerol dimycocerosates (PGL) biosynthesis. The protein is Phthiodiolone/phenolphthiodiolone dimycocerosates ketoreductase of Mycobacterium bovis (strain ATCC BAA-935 / AF2122/97).